The chain runs to 426 residues: Serine--tRNA ligase (426 aa).

Residue 233 to 235 (TAE) coordinates L-serine. ATP is bound at residue 264-266 (RSE). Glu-287 contributes to the L-serine binding site. 351–354 (EISS) provides a ligand contact to ATP. Ser-387 provides a ligand contact to L-serine.

It belongs to the class-II aminoacyl-tRNA synthetase family. Type-1 seryl-tRNA synthetase subfamily. Homodimer. The tRNA molecule binds across the dimer.

The protein localises to the cytoplasm. The enzyme catalyses tRNA(Ser) + L-serine + ATP = L-seryl-tRNA(Ser) + AMP + diphosphate + H(+). It carries out the reaction tRNA(Sec) + L-serine + ATP = L-seryl-tRNA(Sec) + AMP + diphosphate + H(+). The protein operates within aminoacyl-tRNA biosynthesis; selenocysteinyl-tRNA(Sec) biosynthesis; L-seryl-tRNA(Sec) from L-serine and tRNA(Sec): step 1/1. Its function is as follows. Catalyzes the attachment of serine to tRNA(Ser). Is also able to aminoacylate tRNA(Sec) with serine, to form the misacylated tRNA L-seryl-tRNA(Sec), which will be further converted into selenocysteinyl-tRNA(Sec). The chain is Serine--tRNA ligase from Clostridium botulinum (strain 657 / Type Ba4).